Reading from the N-terminus, the 466-residue chain is Putative multidrug resistance protein MdtD (466 aa).

The next 14 membrane-spanning stretches (helical) occupy residues 11-31 (LWIV…VNTA), 48-68 (SVIV…GWLA), 71-91 (IGVK…SLLC), 105-125 (VIQG…VMKI), 137-157 (FVTL…GFLV), 164-184 (WIFL…WFLM), 194-214 (FDIS…LALD), 218-238 (SLGI…IALL), 262-282 (FSIG…LPFM), 286-306 (FLQL…VPMV), 328-347 (VLIV…ALVA), 351-370 (WIWM…AIRF), 403-423 (LGVS…MAAG), and 429-449 (MVFI…ALIF).

It belongs to the major facilitator superfamily. TCR/Tet family.

It localises to the cell inner membrane. The sequence is that of Putative multidrug resistance protein MdtD from Pectobacterium carotovorum subsp. carotovorum (strain PC1).